The chain runs to 165 residues: UPF0303 protein Bcep18194_A4700 (165 aa).

It belongs to the UPF0303 family.

The protein is UPF0303 protein Bcep18194_A4700 of Burkholderia lata (strain ATCC 17760 / DSM 23089 / LMG 22485 / NCIMB 9086 / R18194 / 383).